Here is a 971-residue protein sequence, read N- to C-terminus: Kinesin-like protein KIN-14C (971 aa).

Residues 14–119 (ANRRAEVIDW…CLLALKDNVA (106 aa)) enclose the Calponin-homology (CH) domain. A coiled-coil region spans residues 272-357 (IKALETLVNG…QMETKARQME (86 aa)). Positions 472–799 (NIRVYCRVRP…LKFAERVSGV (328 aa)) constitute a Kinesin motor domain. 556 to 563 (GQTGSGKT) provides a ligand contact to ATP. A coiled-coil region spans residues 809-844 (EGKDIKELLEQVASLKDTIARKDMEIEQLQLLKSKS). The segment covering 839–881 (LLKSKSPNSMTDRNGSNLLRQSTSSTGLSSLPVASQQNQQLSG) has biased composition (polar residues). Positions 839 to 971 (LLKSKSPNSM…GSLAKPSKRR (133 aa)) are disordered.

The protein belongs to the TRAFAC class myosin-kinesin ATPase superfamily. Kinesin family. KIN-14 subfamily.

The sequence is that of Kinesin-like protein KIN-14C from Oryza sativa subsp. japonica (Rice).